The sequence spans 478 residues: UDP-N-acetylmuramate--L-alanine ligase (478 aa).

126 to 132 (GTHGKTT) contacts ATP.

The protein belongs to the MurCDEF family.

The protein resides in the cytoplasm. The catalysed reaction is UDP-N-acetyl-alpha-D-muramate + L-alanine + ATP = UDP-N-acetyl-alpha-D-muramoyl-L-alanine + ADP + phosphate + H(+). It functions in the pathway cell wall biogenesis; peptidoglycan biosynthesis. Cell wall formation. This Mycolicibacterium vanbaalenii (strain DSM 7251 / JCM 13017 / BCRC 16820 / KCTC 9966 / NRRL B-24157 / PYR-1) (Mycobacterium vanbaalenii) protein is UDP-N-acetylmuramate--L-alanine ligase.